The primary structure comprises 206 residues: Large ribosomal subunit protein uL4 (206 aa).

The interval 47 to 94 (NRAQKGRAEVSKSTRKPWRQKGTGRARAGMASSPLWRGGGRVFPNSPE) is disordered. A compositionally biased stretch (basic residues) spans 59–70 (STRKPWRQKGTG).

It belongs to the universal ribosomal protein uL4 family. As to quaternary structure, part of the 50S ribosomal subunit.

Functionally, one of the primary rRNA binding proteins, this protein initially binds near the 5'-end of the 23S rRNA. It is important during the early stages of 50S assembly. It makes multiple contacts with different domains of the 23S rRNA in the assembled 50S subunit and ribosome. Forms part of the polypeptide exit tunnel. The sequence is that of Large ribosomal subunit protein uL4 from Aromatoleum aromaticum (strain DSM 19018 / LMG 30748 / EbN1) (Azoarcus sp. (strain EbN1)).